A 1091-amino-acid polypeptide reads, in one-letter code: ATPase family AAA domain-containing protein 2 (1091 aa).

Positions 32-211 (LEDLGVFNET…HFERRRKRSR (180 aa)) are disordered. Positions 53–62 (KQKDIQRTDE) are enriched in basic and acidic residues. Acidic residues predominate over residues 74-119 (SSEEGEDQEHEDDGEDEDDEDEDDDDDDDDDDDDDEDDEDEEDGEE). Lysine 148 participates in a covalent cross-link: Glycyl lysine isopeptide (Lys-Gly) (interchain with G-Cter in SUMO2). Serine 158, serine 168, serine 173, and serine 241 each carry phosphoserine. An ATP-binding site is contributed by 298-305 (GPPGTGKT). 2 positions are modified to phosphoserine: serine 577 and serine 582. Coiled coils occupy residues 801–825 (LTAE…IFLR) and 917–943 (YAII…KKRG). The region spanning 811–923 (EQEEDTFREL…DTAYAIIKEE (113 aa)) is the Bromo domain. Residue lysine 959 forms a Glycyl lysine isopeptide (Lys-Gly) (interchain with G-Cter in SUMO2) linkage. Positions 961–985 (NSTLVGDKRSDPEQNEKLKTPSTPV) are disordered. The segment covering 966-979 (GDKRSDPEQNEKLK) has biased composition (basic and acidic residues). Phosphoserine is present on serine 970. A Glycyl lysine isopeptide (Lys-Gly) (interchain with G-Cter in SUMO2) cross-link involves residue lysine 979. Residues threonine 980 and threonine 983 each carry the phosphothreonine modification. Serine 1003 is subject to Phosphoserine. Residue threonine 1024 is modified to Phosphothreonine.

It belongs to the AAA ATPase family. As to quaternary structure, interaction with ESR1 and NCOA3 is enhanced by estradiol. Interacts with acetylated lysine residues on histone H1.4, H2A, H2B and H3 (in vitro).

The protein localises to the nucleus. It catalyses the reaction ATP + H2O = ADP + phosphate + H(+). May be a transcriptional coactivator of the nuclear receptor ESR1 required to induce the expression of a subset of estradiol target genes, such as CCND1, MYC and E2F1. May play a role in the recruitment or occupancy of CREBBP at some ESR1 target gene promoters. May be required for histone hyperacetylation. This is ATPase family AAA domain-containing protein 2 (ATAD2) from Pongo abelii (Sumatran orangutan).